A 194-amino-acid chain; its full sequence is Putative manganese efflux pump MntP (194 aa).

The next 6 helical transmembrane spans lie at 3 to 23 (PITT…AAIG), 37 to 57 (LYVA…GWLL), 65 to 85 (IATF…IHMI), 112 to 132 (LAAT…SMAF), 137 to 157 (IGIV…FGVM), and 170 to 190 (AEIV…YEHL).

It belongs to the MntP (TC 9.B.29) family.

Its subcellular location is the cell inner membrane. Its function is as follows. Probably functions as a manganese efflux pump. The sequence is that of Putative manganese efflux pump MntP from Xylella fastidiosa (strain M23).